A 635-amino-acid chain; its full sequence is Threonine--tRNA ligase (635 aa).

In terms of domain architecture, TGS spans 1-61 (MIKITLKDGK…HKDSSLEILT (61 aa)). A catalytic region spans residues 242 to 532 (DHRKLGKELD…LIEQYAGAFP (291 aa)). Zn(2+) contacts are provided by Cys-333, His-384, and His-509.

This sequence belongs to the class-II aminoacyl-tRNA synthetase family. As to quaternary structure, homodimer. Zn(2+) serves as cofactor.

The protein resides in the cytoplasm. It carries out the reaction tRNA(Thr) + L-threonine + ATP = L-threonyl-tRNA(Thr) + AMP + diphosphate + H(+). Its function is as follows. Catalyzes the attachment of threonine to tRNA(Thr) in a two-step reaction: L-threonine is first activated by ATP to form Thr-AMP and then transferred to the acceptor end of tRNA(Thr). Also edits incorrectly charged L-seryl-tRNA(Thr). The polypeptide is Threonine--tRNA ligase (Clostridium botulinum (strain Okra / Type B1)).